Consider the following 175-residue polypeptide: MMTYIVFILSVIFVIGFVGFSSKPSPIYGGLVLIVSGGVGCGIIMNFGGSFLGLMVFLIYLGGMLVVFGYTTAMATEQYPEVWVSNATVMGVFLLGLLMEVMLVLYVLKSEEVGVVFKFSSVGHWAIYDIGNSGVFSEEIMGVAALYSYGAWVVVVTGWSLLVGVLVILEVTRGD.

The next 5 helical transmembrane spans lie at 1 to 21, 25 to 45, 47 to 67, 88 to 108, and 149 to 169; these read MMTY…VGFS, SPIY…GIIM, FGGS…MLVV, TVMG…LYVL, and YGAW…LVIL.

The protein belongs to the complex I subunit 6 family. Core subunit of respiratory chain NADH dehydrogenase (Complex I) which is composed of 45 different subunits.

It is found in the mitochondrion inner membrane. The enzyme catalyses a ubiquinone + NADH + 5 H(+)(in) = a ubiquinol + NAD(+) + 4 H(+)(out). Functionally, core subunit of the mitochondrial membrane respiratory chain NADH dehydrogenase (Complex I) which catalyzes electron transfer from NADH through the respiratory chain, using ubiquinone as an electron acceptor. Essential for the catalytic activity and assembly of complex I. This Equus asinus (Donkey) protein is NADH-ubiquinone oxidoreductase chain 6 (MT-ND6).